Reading from the N-terminus, the 436-residue chain is 3-ketoacyl-CoA thiolase (436 aa).

C99 functions as the Acyl-thioester intermediate in the catalytic mechanism. Catalysis depends on proton acceptor residues H392 and C422.

This sequence belongs to the thiolase-like superfamily. Thiolase family. In terms of assembly, heterotetramer of two alpha chains (FadJ) and two beta chains (FadI).

The protein resides in the cytoplasm. It catalyses the reaction an acyl-CoA + acetyl-CoA = a 3-oxoacyl-CoA + CoA. The protein operates within lipid metabolism; fatty acid beta-oxidation. In terms of biological role, catalyzes the final step of fatty acid oxidation in which acetyl-CoA is released and the CoA ester of a fatty acid two carbons shorter is formed. This chain is 3-ketoacyl-CoA thiolase, found in Shewanella amazonensis (strain ATCC BAA-1098 / SB2B).